Here is a 503-residue protein sequence, read N- to C-terminus: Protein DETOXIFICATION 36 (503 aa).

12 helical membrane-spanning segments follow: residues 54 to 74, 87 to 107, 137 to 157, 166 to 186, 203 to 223, 225 to 245, 271 to 293, 313 to 333, 355 to 375, 399 to 419, 427 to 447, and 456 to 476; these read LFHL…MSML, LAAA…LMLG, IVLV…KPLL, VASV…AYAV, SAYI…LSVF, FGWG…IIVL, GLWD…SWYS, LAIC…FNAA, AVTT…ILSW, FLAI…VAVG, AYVN…VLGF, and IWTG…IVTF.

The protein belongs to the multi antimicrobial extrusion (MATE) (TC 2.A.66.1) family.

It is found in the membrane. The polypeptide is Protein DETOXIFICATION 36 (Arabidopsis thaliana (Mouse-ear cress)).